Consider the following 573-residue polypeptide: Mitochondrial distribution and morphology protein 34 (573 aa).

The SMP-LTD domain maps to 1-195 (MAFNFNWSPL…LPAIIHRLSL (195 aa)). 4 disordered regions span residues 301–326 (EGLG…SSPL), 349–433 (FSGY…RFPN), 499–521 (SREK…ITDA), and 550–573 (LVNN…AYGQ). Residues 306–316 (GLMSPGSPALS) are compositionally biased toward low complexity. Residues 360–373 (RHTKARPTKKRKKR) are compositionally biased toward basic residues. The span at 374 to 385 (VVDLRKQSKPTD) shows a compositional bias: basic and acidic residues. Low complexity predominate over residues 396-409 (TETSTASTTFSSST).

The protein belongs to the MDM34 family. As to quaternary structure, component of the ER-mitochondria encounter structure (ERMES) or MDM complex, composed of MMM1, MDM10, MDM12 and MDM34.

Its subcellular location is the mitochondrion outer membrane. Functionally, component of the ERMES/MDM complex, which serves as a molecular tether to connect the endoplasmic reticulum (ER) and mitochondria. Components of this complex are involved in the control of mitochondrial shape and protein biogenesis, and function in nonvesicular lipid trafficking between the ER and mitochondria. MDM34 is required for the interaction of the ER-resident membrane protein MMM1 and the outer mitochondrial membrane-resident beta-barrel protein MDM10. The polypeptide is Mitochondrial distribution and morphology protein 34 (Uncinocarpus reesii (strain UAMH 1704)).